A 284-amino-acid chain; its full sequence is MKYVGAHVSASGGLANAAIRAAEIEATAFALFTKNQRQWRAAPLSDETIAEFKAACEKYHFGPGQILPHDSYLINLGHPVEEALEKSRDAFIDEMTRCQQLGLTLLNFHPGSHLQQIPEEACLARIAESINIALAKTEGVTAVIENTAGQGSNLGFKFEHLAAIIDGVEDKSRVGVCIDTCHAFAAGYDLRSAEACEKTFADFERIVGFQYLRGMHLNDAKSTFGSRVDRHHSLGEGNIGHDCFRWIMQDSRFNGIPLILETINPDIWAEEIAWLRAQQIAEVA.

Positions 69, 109, 145, 179, 182, 216, 229, 231, and 261 each coordinate Zn(2+).

The protein belongs to the AP endonuclease 2 family. Zn(2+) serves as cofactor.

It carries out the reaction Endonucleolytic cleavage to 5'-phosphooligonucleotide end-products.. In terms of biological role, endonuclease IV plays a role in DNA repair. It cleaves phosphodiester bonds at apurinic or apyrimidinic (AP) sites, generating a 3'-hydroxyl group and a 5'-terminal sugar phosphate. In Klebsiella pneumoniae (strain 342), this protein is Probable endonuclease 4.